We begin with the raw amino-acid sequence, 71 residues long: Mitotic-spindle organizing protein 1 (71 aa).

This sequence belongs to the MOZART1 family. Part of the gamma-tubulin complex.

Its subcellular location is the cytoplasm. The protein resides in the cytoskeleton. The protein localises to the microtubule organizing center. It localises to the spindle pole body. Required for gamma-tubulin complex recruitment to the microtubule organizing center (MTOC). In Aspergillus clavatus (strain ATCC 1007 / CBS 513.65 / DSM 816 / NCTC 3887 / NRRL 1 / QM 1276 / 107), this protein is Mitotic-spindle organizing protein 1.